Consider the following 217-residue polypeptide: Probable transaldolase (217 aa).

Lysine 85 (schiff-base intermediate with substrate) is an active-site residue.

Belongs to the transaldolase family. Type 3B subfamily.

Its subcellular location is the cytoplasm. The catalysed reaction is D-sedoheptulose 7-phosphate + D-glyceraldehyde 3-phosphate = D-erythrose 4-phosphate + beta-D-fructose 6-phosphate. It functions in the pathway carbohydrate degradation; pentose phosphate pathway; D-glyceraldehyde 3-phosphate and beta-D-fructose 6-phosphate from D-ribose 5-phosphate and D-xylulose 5-phosphate (non-oxidative stage): step 2/3. Functionally, transaldolase is important for the balance of metabolites in the pentose-phosphate pathway. The sequence is that of Probable transaldolase from Brachyspira hyodysenteriae (strain ATCC 49526 / WA1).